The primary structure comprises 324 residues: Glyoxylate/hydroxypyruvate reductase B (324 aa).

Catalysis depends on residues arginine 237 and glutamate 266. Histidine 285 functions as the Proton donor in the catalytic mechanism.

The protein belongs to the D-isomer specific 2-hydroxyacid dehydrogenase family. GhrB subfamily. In terms of assembly, homodimer.

Its subcellular location is the cytoplasm. It carries out the reaction glycolate + NADP(+) = glyoxylate + NADPH + H(+). The catalysed reaction is (R)-glycerate + NAD(+) = 3-hydroxypyruvate + NADH + H(+). It catalyses the reaction (R)-glycerate + NADP(+) = 3-hydroxypyruvate + NADPH + H(+). Its function is as follows. Catalyzes the NADPH-dependent reduction of glyoxylate and hydroxypyruvate into glycolate and glycerate, respectively. The chain is Glyoxylate/hydroxypyruvate reductase B from Salmonella typhi.